Consider the following 387-residue polypeptide: Succinyl-diaminopimelate desuccinylase (387 aa).

Residue His75 coordinates Zn(2+). Asp77 is an active-site residue. Zn(2+) is bound at residue Asp108. Glu139 acts as the Proton acceptor in catalysis. Glu140, Glu168, and His357 together coordinate Zn(2+).

The protein belongs to the peptidase M20A family. DapE subfamily. Homodimer. Zn(2+) is required as a cofactor. Co(2+) serves as cofactor.

The catalysed reaction is N-succinyl-(2S,6S)-2,6-diaminopimelate + H2O = (2S,6S)-2,6-diaminopimelate + succinate. It participates in amino-acid biosynthesis; L-lysine biosynthesis via DAP pathway; LL-2,6-diaminopimelate from (S)-tetrahydrodipicolinate (succinylase route): step 3/3. In terms of biological role, catalyzes the hydrolysis of N-succinyl-L,L-diaminopimelic acid (SDAP), forming succinate and LL-2,6-diaminopimelate (DAP), an intermediate involved in the bacterial biosynthesis of lysine and meso-diaminopimelic acid, an essential component of bacterial cell walls. This is Succinyl-diaminopimelate desuccinylase from Caulobacter sp. (strain K31).